The chain runs to 445 residues: Putative ATP-dependent RNA helicase L538 (445 aa).

Residues 14–151 form the Helicase ATP-binding domain; it reads IEFMKNNRGV…AVLVNIVRGE (138 aa). 27 to 34 serves as a coordination point for ATP; the sequence is HSTGAGKT. The DEAH box signature appears at 101-104; the sequence is DEAH. A Helicase C-terminal domain is found at 273-442; the sequence is KIEDIMKYII…VIDASIENNY (170 aa).

Belongs to the DEAD box helicase family. DEAH subfamily.

It localises to the virion. The catalysed reaction is ATP + H2O = ADP + phosphate + H(+). In Acanthamoeba polyphaga mimivirus (APMV), this protein is Putative ATP-dependent RNA helicase L538.